A 311-amino-acid chain; its full sequence is uncharacterized protein (311 aa).

10 helical membrane passes run 13–33 (STAVIKMVISMVIFGSIGFFS), 41–61 (FELVFVRCLCATLFLGFCWLA), 76–96 (LQTLACGFFLVFNWVFLFKSF), 103–123 (IAISVYHLAPVLVLLLGSFFY), 128–148 (NVISVSSIIICFLGTALISGI), 157–177 (LMGSGIIWAVLAALFYAFTTL), 192–212 (FLQTGLGVIILIPFIHFGAFA), 218–238 (NWIMVVSTGIIHTGIVYLLFF), 248–268 (FISIIVFLDPAVAIVLDTVFT), and 272–292 (PDLYQTLGIVMIFAGMALTLV). EamA domains lie at 24-147 (VIFG…LISG) and 166-292 (VLAA…LTLV).

This sequence belongs to the EamA transporter family.

The protein resides in the cell membrane. This is an uncharacterized protein from Bacillus subtilis (strain 168).